Reading from the N-terminus, the 313-residue chain is UPF0761 membrane protein VV0203 (313 aa).

Helical transmembrane passes span 41 to 61 (YLAY…LSIL), 104 to 124 (MTAV…SNID), 139 to 159 (AVFS…LVGA), 185 to 205 (LLRW…YLLV), 215 to 235 (AVVG…GFAA), and 249 to 269 (ALAA…IVLI). Residues 293-313 (LPNNDTELEKDTQRDRFDSES) form a disordered region. The span at 299–313 (ELEKDTQRDRFDSES) shows a compositional bias: basic and acidic residues.

Belongs to the UPF0761 family.

The protein localises to the cell inner membrane. In Vibrio vulnificus (strain YJ016), this protein is UPF0761 membrane protein VV0203.